A 119-amino-acid polypeptide reads, in one-letter code: Large ribosomal subunit protein uL24 (119 aa).

This sequence belongs to the universal ribosomal protein uL24 family. In terms of assembly, part of the 50S ribosomal subunit.

One of two assembly initiator proteins, it binds directly to the 5'-end of the 23S rRNA, where it nucleates assembly of the 50S subunit. Its function is as follows. One of the proteins that surrounds the polypeptide exit tunnel on the outside of the subunit. This chain is Large ribosomal subunit protein uL24, found in Clavibacter michiganensis subsp. michiganensis (strain NCPPB 382).